A 659-amino-acid chain; its full sequence is Protein phosphatase Slingshot homolog 3 (659 aa).

Residues 1–16 are compositionally biased toward polar residues; it reads MALVTVSRSPPGSGAS. The disordered stretch occupies residues 1 to 31; it reads MALVTVSRSPPGSGASTPVGPWDQAVQRRSR. Ala2 is subject to N-acetylalanine. Phosphoserine occurs at positions 9 and 37. The interval 46 to 96 is disordered; sequence LGLQDGGDNDDAAEASSEPTEKAPSEEELHGDQTDFGQGSQSPQKQEEQRQ. The span at 64–78 shows a compositional bias: basic and acidic residues; sequence PTEKAPSEEELHGDQ. The segment covering 80–89 has biased composition (polar residues); the sequence is DFGQGSQSPQ. Ser85 and Ser87 each carry phosphoserine. The DEK-C domain maps to 269–324; that stretch reads EQMEQAIRAELWKVLDVSDLESVTSKEIRQALELRLGLPLQQYRDFIDNQMLLLVA. Residues 328–469 form the Tyrosine-protein phosphatase domain; sequence RASRIFPHLY…LQIYQGILTA (142 aa). Cys413 (phosphocysteine intermediate) is an active-site residue. Disordered regions lie at residues 482–534, 547–603, and 617–638; these read GVSP…RINL, SLEL…RQSV, and QAFQ…ISST. The segment covering 547–557 has biased composition (low complexity); it reads SLELESTSETS.

The protein belongs to the protein-tyrosine phosphatase family. In terms of assembly, does not bind to, or colocalize with, filamentous actin.

It localises to the cytoplasm. The protein resides in the cytoskeleton. Its subcellular location is the nucleus. It carries out the reaction O-phospho-L-tyrosyl-[protein] + H2O = L-tyrosyl-[protein] + phosphate. The catalysed reaction is O-phospho-L-seryl-[protein] + H2O = L-seryl-[protein] + phosphate. The enzyme catalyses O-phospho-L-threonyl-[protein] + H2O = L-threonyl-[protein] + phosphate. Its function is as follows. Protein phosphatase which may play a role in the regulation of actin filament dynamics. Can dephosphorylate and activate the actin binding/depolymerizing factor cofilin, which subsequently binds to actin filaments and stimulates their disassembly. The polypeptide is Protein phosphatase Slingshot homolog 3 (SSH3) (Homo sapiens (Human)).